The chain runs to 385 residues: Putative transport protein MT1133 (385 aa).

Helical transmembrane passes span 7–27 (LTQK…GAYF), 32–52 (FVLI…FKWF), 66–86 (LLSA…LAIV), 159–179 (SLAG…ALLV), 218–238 (FVIA…AGFH), 241–261 (FFIF…GGIV), 263–283 (IPFG…FVLL), and 319–339 (GITM…ILIV).

It belongs to the autoinducer-2 exporter (AI-2E) (TC 2.A.86) family.

It localises to the cell membrane. The sequence is that of Putative transport protein MT1133 from Mycobacterium tuberculosis (strain CDC 1551 / Oshkosh).